The following is a 258-amino-acid chain: tRNA pseudouridine synthase A (258 aa).

Aspartate 52 (nucleophile) is an active-site residue. Tyrosine 110 is a substrate binding site.

Belongs to the tRNA pseudouridine synthase TruA family. As to quaternary structure, homodimer.

The enzyme catalyses uridine(38/39/40) in tRNA = pseudouridine(38/39/40) in tRNA. Its function is as follows. Formation of pseudouridine at positions 38, 39 and 40 in the anticodon stem and loop of transfer RNAs. The protein is tRNA pseudouridine synthase A of Francisella philomiragia subsp. philomiragia (strain ATCC 25017 / CCUG 19701 / FSC 153 / O#319-036).